We begin with the raw amino-acid sequence, 856 residues long: Beta-galactosidase 3 (856 aa).

The first 31 residues, M1–C31, serve as a signal peptide directing secretion. Residue E189 is the Proton donor of the active site. The active-site Nucleophile is the E258. N-linked (GlcNAc...) asparagine glycosylation is present at N468. Residues T760 to A846 enclose the SUEL-type lectin domain.

It belongs to the glycosyl hydrolase 35 family. Ubiquitous.

The protein resides in the secreted. The protein localises to the extracellular space. It is found in the apoplast. The enzyme catalyses Hydrolysis of terminal non-reducing beta-D-galactose residues in beta-D-galactosides.. The protein is Beta-galactosidase 3 (BGAL3) of Arabidopsis thaliana (Mouse-ear cress).